The following is a 403-amino-acid chain: Tyrosine--tRNA ligase (403 aa).

The 'HIGH' region motif lies at 43–52 (PTAPDLHLGH). The 'KMSKS' region signature appears at 227–231 (KMSKS). K230 provides a ligand contact to ATP. Residues 338–399 (LPIAQLLKQT…GKRKFARVTI (62 aa)) enclose the S4 RNA-binding domain.

Belongs to the class-I aminoacyl-tRNA synthetase family. TyrS type 2 subfamily. Homodimer.

It is found in the cytoplasm. The catalysed reaction is tRNA(Tyr) + L-tyrosine + ATP = L-tyrosyl-tRNA(Tyr) + AMP + diphosphate + H(+). Functionally, catalyzes the attachment of tyrosine to tRNA(Tyr) in a two-step reaction: tyrosine is first activated by ATP to form Tyr-AMP and then transferred to the acceptor end of tRNA(Tyr). This is Tyrosine--tRNA ligase from Nitrosospira multiformis (strain ATCC 25196 / NCIMB 11849 / C 71).